Consider the following 121-residue polypeptide: Small ribosomal subunit protein uS13 (121 aa).

The tract at residues 94–121 (GLPVRGQRTRTNARTRKGPRKGAAALKK) is disordered.

It belongs to the universal ribosomal protein uS13 family. Part of the 30S ribosomal subunit. Forms a loose heterodimer with protein S19. Forms two bridges to the 50S subunit in the 70S ribosome.

Functionally, located at the top of the head of the 30S subunit, it contacts several helices of the 16S rRNA. In the 70S ribosome it contacts the 23S rRNA (bridge B1a) and protein L5 of the 50S subunit (bridge B1b), connecting the 2 subunits; these bridges are implicated in subunit movement. Contacts the tRNAs in the A and P-sites. The sequence is that of Small ribosomal subunit protein uS13 from Verminephrobacter eiseniae (strain EF01-2).